Here is a 660-residue protein sequence, read N- to C-terminus: Poly [ADP-ribose] polymerase 2-A (660 aa).

Positions 2 to 36 (SARLRVEELRAELQRRGLDASGNKPVLVRRLDAAI) constitute an SAP 1 domain. The tract at residues 40–92 (EEEEAAVSAAAKEEADAGGVVDGEGNGEDKRKRKRRGDGEDVDNSESDAAKLE) is disordered. Residues 69 to 75 (KRKRKRR) carry the Nuclear localization signal motif. Positions 91–125 (LEGMSYRELQALAKSRGLAANGSKKEVIERLLCAP) constitute an SAP 2 domain. A WGR domain is found at 179 to 281 (TYHVLQVWFL…KSFECYARKY (103 aa)). A PARP alpha-helical domain is found at 308-426 (ETKLETRIAS…EIEIATKLLE (119 aa)). The PARP catalytic domain occupies 434–660 (DPLYARYKQL…LHVSFNFKKR (227 aa)).

Belongs to the ARTD/PARP family.

Its subcellular location is the nucleus. The catalysed reaction is NAD(+) + (ADP-D-ribosyl)n-acceptor = nicotinamide + (ADP-D-ribosyl)n+1-acceptor + H(+).. It carries out the reaction L-aspartyl-[protein] + NAD(+) = 4-O-(ADP-D-ribosyl)-L-aspartyl-[protein] + nicotinamide. It catalyses the reaction L-glutamyl-[protein] + NAD(+) = 5-O-(ADP-D-ribosyl)-L-glutamyl-[protein] + nicotinamide. In terms of biological role, involved in the base excision repair (BER) pathway, by catalyzing the poly(ADP-ribosyl)ation of a limited number of acceptor proteins involved in chromatin architecture and in DNA metabolism. This modification follows DNA damages and appears as an obligatory step in a detection/signaling pathway leading to the reparation of DNA strand breaks. The sequence is that of Poly [ADP-ribose] polymerase 2-A (PARP2-A) from Oryza sativa subsp. japonica (Rice).